The sequence spans 495 residues: Glucose-6-phosphate 1-dehydrogenase (495 aa).

Ser1 carries the N-acetylserine modification. NADP(+) contacts are provided by residues 15–22 (GASGDLAR), Arg49, and Lys149. D-glucose 6-phosphate-binding positions include Lys149, 179–183 (HYLGK), Glu217, and Asp236. His241 (proton acceptor) is an active-site residue. An NADP(+)-binding site is contributed by Arg332. Lys335 is a D-glucose 6-phosphate binding site. The NADP(+) site is built by Lys341, Arg345, and Arg367. Gln369 provides a ligand contact to D-glucose 6-phosphate. NADP(+)-binding positions include 375 to 377 (YLK), 395 to 397 (DLT), and Lys463.

It belongs to the glucose-6-phosphate dehydrogenase family.

It catalyses the reaction D-glucose 6-phosphate + NADP(+) = 6-phospho-D-glucono-1,5-lactone + NADPH + H(+). Its pathway is carbohydrate degradation; pentose phosphate pathway; D-ribulose 5-phosphate from D-glucose 6-phosphate (oxidative stage): step 1/3. Catalyzes the rate-limiting step of the oxidative pentose-phosphate pathway, which represents a route for the dissimilation of carbohydrates besides glycolysis. The main function of this enzyme is to provide reducing power (NADPH) and pentose phosphates for fatty acid and nucleic acid synthesis. The protein is Glucose-6-phosphate 1-dehydrogenase of Cyberlindnera jadinii (Torula yeast).